Here is a 462-residue protein sequence, read N- to C-terminus: uncharacterized protein (462 aa).

7 WD repeats span residues 170–209, 212–260, 263–302, 305–344, 347–386, 389–430, and 433–462; these read GGER…EVQL, GHTD…PLLR, GHLA…ELLM, GHSE…SIMV, EHIR…LAHT, AHSS…LIKS, and GHEE…LWYP.

It is found in the cytoplasm. This is an uncharacterized protein from Schizosaccharomyces pombe (strain 972 / ATCC 24843) (Fission yeast).